Here is a 451-residue protein sequence, read N- to C-terminus: 23S rRNA (uracil(1939)-C(5))-methyltransferase RlmD (451 aa).

The tract at residues 1–21 (MAKHERGLRFQPTGGVKSVQI) is disordered. One can recognise a TRAM domain in the interval 20 to 78 (QIPAGKKQRLSIERLSDDGRGIAFLEGKTWFVAGSLAGEEVEARVLNARGKVVEARTER). 4 residues coordinate [4Fe-4S] cluster: Cys-91, Cys-97, Cys-100, and Cys-179. S-adenosyl-L-methionine is bound by residues Gln-283, Phe-312, Asn-317, Glu-333, Asp-360, and Asp-381. The Nucleophile role is filled by Cys-407.

The protein belongs to the class I-like SAM-binding methyltransferase superfamily. RNA M5U methyltransferase family. RlmD subfamily.

The catalysed reaction is uridine(1939) in 23S rRNA + S-adenosyl-L-methionine = 5-methyluridine(1939) in 23S rRNA + S-adenosyl-L-homocysteine + H(+). In terms of biological role, catalyzes the formation of 5-methyl-uridine at position 1939 (m5U1939) in 23S rRNA. This Pseudomonas syringae pv. tomato (strain ATCC BAA-871 / DC3000) protein is 23S rRNA (uracil(1939)-C(5))-methyltransferase RlmD.